The chain runs to 307 residues: Mitochondrial brown fat uncoupling protein 1 (307 aa).

Topologically, residues 1–10 are mitochondrial intermembrane; it reads MVSQTTSEVQ. The helical transmembrane segment at 11–32 threads the bilayer; that stretch reads PTMGVKIFSAGVAACLADIITF. 3 Solcar repeats span residues 11 to 102, 111 to 201, and 210 to 295; these read PTMG…VQEY, PTLV…MKGA, and DDVP…LKKE. Residues 33–73 lie on the Mitochondrial matrix side of the membrane; that stretch reads PLDTAKVRLQIQGEGQTSSTIRYKGVLGTITTLAKTEGLPK. K56 serves as a coordination point for fatty acid 16:0. Residues 74 to 96 form a helical membrane-spanning segment; it reads LYSGLPAGIQRQISFASLRIGLY. Topologically, residues 97–116 are mitochondrial intermembrane; sequence DTVQEYFSSGKETPPTLVNR. Residues 117–133 traverse the membrane as a helical segment; that stretch reads ISAGLMTGGVAVFIGQP. The Mitochondrial matrix portion of the chain corresponds to 134 to 178; sequence TEVVKVRLQAQSHLHGIKPRYTGTYNAYRIIATTESLSTLWKGTT. The chain crosses the membrane as a helical span at residues 179 to 195; that stretch reads PNLLRNVIINCTELVTY. The Mitochondrial intermembrane portion of the chain corresponds to 196 to 212; sequence DLMKGALVNNQILADDV. The chain crosses the membrane as a helical span at residues 213–232; that stretch reads PCHLLSALVAGFCTTFLASP. Topologically, residues 233 to 266 are mitochondrial matrix; sequence ADVVKTRFINSLPGQYPSVPSCAMTMFTKEGPTA. C254 carries the cysteine sulfenic acid (-SOH) modification. Residues 267-289 form a helical membrane-spanning segment; the sequence is FFKGFVPSFLRLASWNVIMFVCF. Residue K269 participates in fatty acid 16:0 binding. At 290-307 the chain is on the mitochondrial intermembrane side; that stretch reads EQLKKELMKSRQTVDCTT.

Belongs to the mitochondrial carrier (TC 2.A.29) family. As to quaternary structure, most probably functions as a monomer. Binds one purine nucleotide per monomer. However, has also been suggested to function as a homodimer or a homotetramer. Tightly associates with cardiolipin in the mitochondrion inner membrane; may stabilize and regulate its activity. Post-translationally, may undergo sulfenylation upon cold exposure. May increase the sensitivity of UCP1 thermogenic function to the activation by noradrenaline probably through structural effects. In terms of processing, may undergo ubiquitin-mediated proteasomal degradation. In terms of tissue distribution, brown adipose tissue.

The protein localises to the mitochondrion inner membrane. It catalyses the reaction H(+)(in) = H(+)(out). Its activity is regulated as follows. Has no constitutive proton transporter activity and has to be activated by long-chain fatty acids/LCFAs. Inhibited by purine nucleotides. Both purine nucleotides and LCFAs bind the cytosolic side of the transporter and directly compete to activate or inhibit it. Activated by noradrenaline and reactive oxygen species. Despite lacking canonical translational encoding for selenocysteine, a small pool of the protein has been observed to selectively incorporate selenocysteine at 'Cys-254'. Selenocysteine-modified protein is highly sensitive to redox modification and may constitute a pool of protein highly sensitive to activation by elevated levels of reactive oxygen species (ROS). Its function is as follows. Mitochondrial protein responsible for thermogenic respiration, a specialized capacity of brown adipose tissue and beige fat that participates in non-shivering adaptive thermogenesis to temperature and diet variations and more generally to the regulation of energy balance. Functions as a long-chain fatty acid/LCFA and proton symporter, simultaneously transporting one LCFA and one proton through the inner mitochondrial membrane. However, LCFAs remaining associated with the transporter via their hydrophobic tails, it results in an apparent transport of protons activated by LCFAs. Thereby, dissipates the mitochondrial proton gradient and converts the energy of substrate oxydation into heat instead of ATP. Regulates the production of reactive oxygen species/ROS by mitochondria. In Phodopus sungorus (Striped hairy-footed hamster), this protein is Mitochondrial brown fat uncoupling protein 1.